A 214-amino-acid polypeptide reads, in one-letter code: MSDTQHSCVIIGIAGASASGKSLIAQTIYEELVAELGAGQIGVITEDCYYRDQTHLTMEERVKTNYDHPNALDHDLLVQHLSQLVKGDAVNIPQYSYTEHTRMNDVTPFAPRRVIILEGILLLTDSRLRDLMDASIFMDTPLDICLLRRLVRDVQERGRTMDSVLKQYQKTVRPMFLQFIEPSKQYADVIVPRGGKNRIAIDMLKARILHMLIG.

15–22 (GASASGKS) serves as a coordination point for ATP.

Belongs to the uridine kinase family.

The protein resides in the cytoplasm. The enzyme catalyses uridine + ATP = UMP + ADP + H(+). The catalysed reaction is cytidine + ATP = CMP + ADP + H(+). Its pathway is pyrimidine metabolism; CTP biosynthesis via salvage pathway; CTP from cytidine: step 1/3. It participates in pyrimidine metabolism; UMP biosynthesis via salvage pathway; UMP from uridine: step 1/1. This chain is Uridine kinase, found in Aeromonas salmonicida (strain A449).